The primary structure comprises 55 residues: Large ribosomal subunit protein bL33B (55 aa).

This sequence belongs to the bacterial ribosomal protein bL33 family.

The chain is Large ribosomal subunit protein bL33B (rpmG2) from Mycobacterium tuberculosis (strain CDC 1551 / Oshkosh).